A 234-amino-acid chain; its full sequence is MRDEVFKRPIKKQFEFDESVVSVFDDMVSRSVPYYCDVQALISLILSKNLSPNAKVFDLGCSTATTLLEIFKLRSDLSLNGVDSSEAMIKTARNRSLAYLANLNLYVSDILDFDFSGSDAVILNYTLQFIRPIKREEFIKKIYSNLKSGGIFIFSEKLVYEDKKLTLDMIEIYENYKHSQGYSKFEIAQKRQALENILIPYSENENKELCLNAGFKSVETIFKWANFATFIAFK.

Residues Tyr-35, 60-62, 109-110, Asn-124, and Arg-191 contribute to the S-adenosyl-L-methionine site; these read GCS and DI.

The protein belongs to the class I-like SAM-binding methyltransferase superfamily. Cx-SAM synthase family. Homodimer.

The catalysed reaction is prephenate + S-adenosyl-L-methionine = carboxy-S-adenosyl-L-methionine + 3-phenylpyruvate + H2O. Its function is as follows. Catalyzes the conversion of S-adenosyl-L-methionine (SAM) to carboxy-S-adenosyl-L-methionine (Cx-SAM). This Campylobacter fetus subsp. fetus (strain 82-40) protein is Carboxy-S-adenosyl-L-methionine synthase.